The following is a 458-amino-acid chain: Glutamyl-tRNA(Gln) amidotransferase subunit D (458 aa).

Residues 97–434 form the Asparaginase/glutaminase domain; sequence PNVSVMSTGG…KEVERLMRTN (338 aa). Residues T107, T185, D186, and K264 contribute to the active site.

Belongs to the asparaginase 1 family. GatD subfamily. As to quaternary structure, heterodimer of GatD and GatE.

It carries out the reaction L-glutamyl-tRNA(Gln) + L-glutamine + ATP + H2O = L-glutaminyl-tRNA(Gln) + L-glutamate + ADP + phosphate + H(+). In terms of biological role, allows the formation of correctly charged Gln-tRNA(Gln) through the transamidation of misacylated Glu-tRNA(Gln) in organisms which lack glutaminyl-tRNA synthetase. The reaction takes place in the presence of glutamine and ATP through an activated gamma-phospho-Glu-tRNA(Gln). The GatDE system is specific for glutamate and does not act on aspartate. The polypeptide is Glutamyl-tRNA(Gln) amidotransferase subunit D (Methanopyrus kandleri (strain AV19 / DSM 6324 / JCM 9639 / NBRC 100938)).